Here is a 561-residue protein sequence, read N- to C-terminus: Dihydroxy-acid dehydratase (561 aa).

A [2Fe-2S] cluster-binding site is contributed by Cys-51. A Mg(2+)-binding site is contributed by Asp-83. Cys-124 provides a ligand contact to [2Fe-2S] cluster. Residues Asp-125 and Lys-126 each contribute to the Mg(2+) site. At Lys-126 the chain carries N6-carboxylysine. Cys-196 is a [2Fe-2S] cluster binding site. Glu-448 serves as a coordination point for Mg(2+). The active-site Proton acceptor is Ser-473.

Belongs to the IlvD/Edd family. In terms of assembly, homodimer. It depends on [2Fe-2S] cluster as a cofactor. Mg(2+) serves as cofactor.

It carries out the reaction (2R)-2,3-dihydroxy-3-methylbutanoate = 3-methyl-2-oxobutanoate + H2O. It catalyses the reaction (2R,3R)-2,3-dihydroxy-3-methylpentanoate = (S)-3-methyl-2-oxopentanoate + H2O. Its pathway is amino-acid biosynthesis; L-isoleucine biosynthesis; L-isoleucine from 2-oxobutanoate: step 3/4. It functions in the pathway amino-acid biosynthesis; L-valine biosynthesis; L-valine from pyruvate: step 3/4. Functions in the biosynthesis of branched-chain amino acids. Catalyzes the dehydration of (2R,3R)-2,3-dihydroxy-3-methylpentanoate (2,3-dihydroxy-3-methylvalerate) into 2-oxo-3-methylpentanoate (2-oxo-3-methylvalerate) and of (2R)-2,3-dihydroxy-3-methylbutanoate (2,3-dihydroxyisovalerate) into 2-oxo-3-methylbutanoate (2-oxoisovalerate), the penultimate precursor to L-isoleucine and L-valine, respectively. This chain is Dihydroxy-acid dehydratase, found in Sulfolobus acidocaldarius (strain ATCC 33909 / DSM 639 / JCM 8929 / NBRC 15157 / NCIMB 11770).